The chain runs to 433 residues: Probable glycine dehydrogenase (decarboxylating) subunit 1 (433 aa).

It belongs to the GcvP family. N-terminal subunit subfamily. As to quaternary structure, the glycine cleavage system is composed of four proteins: P, T, L and H. In this organism, the P 'protein' is a heterodimer of two subunits.

It carries out the reaction N(6)-[(R)-lipoyl]-L-lysyl-[glycine-cleavage complex H protein] + glycine + H(+) = N(6)-[(R)-S(8)-aminomethyldihydrolipoyl]-L-lysyl-[glycine-cleavage complex H protein] + CO2. Functionally, the glycine cleavage system catalyzes the degradation of glycine. The P protein binds the alpha-amino group of glycine through its pyridoxal phosphate cofactor; CO(2) is released and the remaining methylamine moiety is then transferred to the lipoamide cofactor of the H protein. The polypeptide is Probable glycine dehydrogenase (decarboxylating) subunit 1 (Thermoplasma acidophilum (strain ATCC 25905 / DSM 1728 / JCM 9062 / NBRC 15155 / AMRC-C165)).